The following is a 32-amino-acid chain: Natriuretic peptide Coa_NP1 (32 aa).

A disulfide bond links C8 and C24.

This sequence belongs to the natriuretic peptide family. Snake NP subfamily. Expressed by the venom gland.

It localises to the secreted. In terms of biological role, snake venom natriuretic peptide that exhibits hypotensive and vasodepressor activity in rats. In Crotalus lutosus abyssus (Grand Canyon rattlesnake), this protein is Natriuretic peptide Coa_NP1.